The chain runs to 115 residues: UPF0125 protein VP0646 (115 aa).

A disordered region spans residues 92 to 115; the sequence is RAEQAKAAGNADPVTGGKPNALRK.

It belongs to the UPF0125 (RnfH) family.

This chain is UPF0125 protein VP0646, found in Vibrio parahaemolyticus serotype O3:K6 (strain RIMD 2210633).